A 369-amino-acid chain; its full sequence is tRNA pseudouridine synthase D (369 aa).

Asp-80 functions as the Nucleophile in the catalytic mechanism. A TRUD domain is found at Gly-156 to Leu-318.

The protein belongs to the pseudouridine synthase TruD family.

It carries out the reaction uridine(13) in tRNA = pseudouridine(13) in tRNA. Responsible for synthesis of pseudouridine from uracil-13 in transfer RNAs. The sequence is that of tRNA pseudouridine synthase D from Xanthomonas euvesicatoria pv. vesicatoria (strain 85-10) (Xanthomonas campestris pv. vesicatoria).